Reading from the N-terminus, the 68-residue chain is Antimicrobial peptide Eval655 (68 aa).

Residues 1–23 (MKTQFVVLLVALVLLQMFAQSEA) form the signal peptide. Residue Leu-36 is modified to Leucine amide. Residues 37–68 (GKRGLKNLDDFDDIFDDDLSSADLEFLKQLMR) constitute a propeptide that is removed on maturation.

The protein belongs to the non-disulfide-bridged peptide (NDBP) superfamily. Short antimicrobial peptide (group 4) family. Expressed by the venom gland.

The protein resides in the secreted. Its function is as follows. Probable antimicrobial peptide. Shows low inhibitory activity against herpes simplex virus type 1 (HSV-1). The chain is Antimicrobial peptide Eval655 from Euscorpiops validus (Scorpion).